Here is a 223-residue protein sequence, read N- to C-terminus: GTP cyclohydrolase 1 (223 aa).

Zn(2+)-binding residues include Cys114, His117, and Cys185.

Belongs to the GTP cyclohydrolase I family. Homomer.

It catalyses the reaction GTP + H2O = 7,8-dihydroneopterin 3'-triphosphate + formate + H(+). Its pathway is cofactor biosynthesis; 7,8-dihydroneopterin triphosphate biosynthesis; 7,8-dihydroneopterin triphosphate from GTP: step 1/1. This chain is GTP cyclohydrolase 1, found in Chlorobium chlorochromatii (strain CaD3).